We begin with the raw amino-acid sequence, 719 residues long: Catalase-3 (719 aa).

The N-terminal stretch at 1–18 (MRVNALLPLSGLIGTALA) is a signal peptide. The propeptide occupies 19 to 30 (ACPFADPSALGR). Residues H102 and N175 contribute to the active site. Y389 is a binding site for heme.

Belongs to the catalase family. Heme serves as cofactor.

The catalysed reaction is 2 H2O2 = O2 + 2 H2O. Functionally, occurs in almost all aerobically respiring organisms and serves to protect cells from the toxic effects of hydrogen peroxide. This Neurospora crassa (strain ATCC 24698 / 74-OR23-1A / CBS 708.71 / DSM 1257 / FGSC 987) protein is Catalase-3 (cat-3).